The primary structure comprises 447 residues: C4-dicarboxylate transport protein (447 aa).

The next 8 membrane-spanning stretches (helical) occupy residues 19–39 (ILYV…HFYP), 55–75 (LVKM…IAGL), 90–110 (IYFL…ANVV), 155–175 (AFAS…GIAL), 199–219 (LVAI…AFTI), 232–252 (MLVG…LGLV), 343–363 (LLLV…AGFI), and 366–386 (AATL…ILGV).

Belongs to the dicarboxylate/amino acid:cation symporter (DAACS) (TC 2.A.23) family.

The protein resides in the cell inner membrane. Its function is as follows. Responsible for the transport of dicarboxylates such as succinate, fumarate, and malate from the periplasm across the membrane. The sequence is that of C4-dicarboxylate transport protein from Rhodospirillum rubrum (strain ATCC 11170 / ATH 1.1.1 / DSM 467 / LMG 4362 / NCIMB 8255 / S1).